A 492-amino-acid chain; its full sequence is NADPH:adrenodoxin oxidoreductase, mitochondrial (492 aa).

A mitochondrion-targeting transit peptide spans 1-32 (MAPRCWRWWPWSSWTRTRLPPSRSIQNFGQHF). The FAD site is built by Ala49, Glu70, Leu78, and Val114. Residues 185 to 188 (QGNV), 229 to 230 (RR), and Glu241 contribute to the NADP(+) site. Phosphoserine occurs at positions 311 and 318. FAD is bound by residues Trp399 and 406–408 (GVI). Residue Gly406 coordinates NADP(+).

The protein belongs to the ferredoxin--NADP reductase type 1 family. As to quaternary structure, monomer. Interacts directly with FDX1. FAD is required as a cofactor. Detected in adrenal cortex and corpus luteum (at protein level).

It is found in the mitochondrion inner membrane. It carries out the reaction 2 reduced [adrenodoxin] + NADP(+) + H(+) = 2 oxidized [adrenodoxin] + NADPH. It catalyses the reaction 2 reduced [2Fe-2S]-[ferredoxin] + NADP(+) + H(+) = 2 oxidized [2Fe-2S]-[ferredoxin] + NADPH. It functions in the pathway steroid metabolism; cholesterol metabolism. Its function is as follows. Serves as the first electron transfer protein in all the mitochondrial P450 systems including cholesterol side chain cleavage in all steroidogenic tissues, steroid 11-beta hydroxylation in the adrenal cortex, 25-OH-vitamin D3-24 hydroxylation in the kidney, and sterol C-27 hydroxylation in the liver. Also acts as a ferredoxin--NADP(+) reductase essential for coenzyme Q biosynthesis: together with FDX2, transfers the electrons required for the hydroxylation reaction performed by COQ6. The protein is NADPH:adrenodoxin oxidoreductase, mitochondrial (FDXR) of Bos taurus (Bovine).